Consider the following 264-residue polypeptide: S-adenosylmethionine decarboxylase proenzyme (264 aa).

Ser112 acts as the Schiff-base intermediate with substrate; via pyruvic acid in catalysis. Ser112 carries the pyruvic acid (Ser); by autocatalysis modification. His117 serves as the catalytic Proton acceptor; for processing activity. Cys140 functions as the Proton donor; for catalytic activity in the catalytic mechanism.

Belongs to the prokaryotic AdoMetDC family. Type 2 subfamily. In terms of assembly, heterooctamer of four alpha and four beta chains arranged as a tetramer of alpha/beta heterodimers. Requires pyruvate as cofactor. In terms of processing, is synthesized initially as an inactive proenzyme. Formation of the active enzyme involves a self-maturation process in which the active site pyruvoyl group is generated from an internal serine residue via an autocatalytic post-translational modification. Two non-identical subunits are generated from the proenzyme in this reaction, and the pyruvate is formed at the N-terminus of the alpha chain, which is derived from the carboxyl end of the proenzyme. The post-translation cleavage follows an unusual pathway, termed non-hydrolytic serinolysis, in which the side chain hydroxyl group of the serine supplies its oxygen atom to form the C-terminus of the beta chain, while the remainder of the serine residue undergoes an oxidative deamination to produce ammonia and the pyruvoyl group blocking the N-terminus of the alpha chain.

It carries out the reaction S-adenosyl-L-methionine + H(+) = S-adenosyl 3-(methylsulfanyl)propylamine + CO2. It participates in amine and polyamine biosynthesis; S-adenosylmethioninamine biosynthesis; S-adenosylmethioninamine from S-adenosyl-L-methionine: step 1/1. Its function is as follows. Catalyzes the decarboxylation of S-adenosylmethionine to S-adenosylmethioninamine (dcAdoMet), the propylamine donor required for the synthesis of the polyamines spermine and spermidine from the diamine putrescine. In Citrobacter koseri (strain ATCC BAA-895 / CDC 4225-83 / SGSC4696), this protein is S-adenosylmethionine decarboxylase proenzyme.